The following is a 113-amino-acid chain: Tubulin alpha chain (113 aa).

E52 contacts GTP. Residue E52 participates in Mg(2+) binding.

The protein belongs to the tubulin family. As to quaternary structure, dimer of alpha and beta chains. A typical microtubule is a hollow water-filled tube with an outer diameter of 25 nm and an inner diameter of 15 nM. Alpha-beta heterodimers associate head-to-tail to form protofilaments running lengthwise along the microtubule wall with the beta-tubulin subunit facing the microtubule plus end conferring a structural polarity. Microtubules usually have 13 protofilaments but different protofilament numbers can be found in some organisms and specialized cells. The cofactor is Mg(2+).

Its subcellular location is the cytoplasm. The protein localises to the cytoskeleton. It catalyses the reaction GTP + H2O = GDP + phosphate + H(+). Functionally, tubulin is the major constituent of microtubules, a cylinder consisting of laterally associated linear protofilaments composed of alpha- and beta-tubulin heterodimers. Microtubules grow by the addition of GTP-tubulin dimers to the microtubule end, where a stabilizing cap forms. Below the cap, tubulin dimers are in GDP-bound state, owing to GTPase activity of alpha-tubulin. The chain is Tubulin alpha chain (TUBA) from Picea abies (Norway spruce).